We begin with the raw amino-acid sequence, 299 residues long: Elongation factor Ts (299 aa).

Residues 82–85 (TDFV) are involved in Mg(2+) ion dislocation from EF-Tu.

Belongs to the EF-Ts family.

It is found in the cytoplasm. Associates with the EF-Tu.GDP complex and induces the exchange of GDP to GTP. It remains bound to the aminoacyl-tRNA.EF-Tu.GTP complex up to the GTP hydrolysis stage on the ribosome. The polypeptide is Elongation factor Ts (Dechloromonas aromatica (strain RCB)).